Here is a 429-residue protein sequence, read N- to C-terminus: 3-phosphoshikimate 1-carboxyvinyltransferase (429 aa).

Positions 11, 12, and 16 each coordinate 3-phosphoshikimate. Phosphoenolpyruvate is bound at residue lysine 11. Phosphoenolpyruvate contacts are provided by glycine 82 and arginine 110. Residues serine 155, glutamine 157, aspartate 302, and lysine 329 each contribute to the 3-phosphoshikimate site. Residue glutamine 157 participates in phosphoenolpyruvate binding. Catalysis depends on aspartate 302, which acts as the Proton acceptor. Arginine 333 and arginine 385 together coordinate phosphoenolpyruvate.

This sequence belongs to the EPSP synthase family. In terms of assembly, monomer.

It localises to the cytoplasm. The catalysed reaction is 3-phosphoshikimate + phosphoenolpyruvate = 5-O-(1-carboxyvinyl)-3-phosphoshikimate + phosphate. Its pathway is metabolic intermediate biosynthesis; chorismate biosynthesis; chorismate from D-erythrose 4-phosphate and phosphoenolpyruvate: step 6/7. Its function is as follows. Catalyzes the transfer of the enolpyruvyl moiety of phosphoenolpyruvate (PEP) to the 5-hydroxyl of shikimate-3-phosphate (S3P) to produce enolpyruvyl shikimate-3-phosphate and inorganic phosphate. The polypeptide is 3-phosphoshikimate 1-carboxyvinyltransferase (Helicobacter pylori (strain Shi470)).